A 236-amino-acid chain; its full sequence is MAATRAAPKTASKKEHQYCLLDSQEKRHGHYPFSFELKPYGQTGANIIGVQGSLTHVIKMTVFPFMIPFPLQKIHIDDFIGGRVYLFFKELDVQAISDVNGMQYHFEFKVVPVSSNQVELLPVNNKYKFTYAIPEVQYLTPIFYDLSGPLNFPLDTLSVHVDSLTNHIQLPIQNHNLTTGDRVFISGYKHLQTIELCKNNKIFIKCIPPLSSEKIKLYIPKNRIRIPLYFKSLKNV.

It belongs to the asfivirus H240R family.

It is found in the virion. Its function is as follows. Forms the penton at the fivefold vertices of the icosahedral capsid. Together with the minor capsid proteins (p17, p49, and M1249L), forms a complicated network immediately below the outer capsid shell, stabilizing the whole capsid. The protein is Penton protein H240R of African swine fever virus (isolate Warthog/Namibia/Wart80/1980) (ASFV).